Consider the following 355-residue polypeptide: MKKLVLIGGGYGNMRVLHRLLPNQLPDDVSITLIDRNPYHCLKTEYYALAAGTISDHHIRVSFPEHPRLDVQYGDITSIDIVQKQVLFQDREPISYDDAIIGLGCEDKYHNVPGAPEFTYSIQTIDQSRETYQKLNNLSANATVAIVGAGLSGVELASELRESRDDLNIILFDRGNLILSSFPERLSKYVQKWFEEHGVRIINRANITKVEEGVVYNHDDPISADAIVWTAGIQPNKVVRDLDVEKDAQGRIVLTPHHNLPGDEHLYVVGDCASLPHAPSAQLAEAQAEQIVQILQKRWNGEALPESMPQFKLKGVLGSLGKKAGFGLVADRPLIGRVPRMLKSGLLWMYKHHNG.

The protein belongs to the NADH dehydrogenase family. FAD serves as cofactor.

In Bacillus subtilis (strain 168), this protein is NADH dehydrogenase-like protein YutJ (yutJ).